The sequence spans 100 residues: Small ribosomal subunit protein bS6 (100 aa).

It belongs to the bacterial ribosomal protein bS6 family.

Its function is as follows. Binds together with bS18 to 16S ribosomal RNA. This chain is Small ribosomal subunit protein bS6, found in Tropheryma whipplei (strain Twist) (Whipple's bacillus).